A 174-amino-acid chain; its full sequence is uncharacterized protein (174 aa).

Helical transmembrane passes span 29-51 (FAVELIPAINYFIFVGLCFGFWY) and 66-83 (VIVIFGIPFFLTMLVTKI).

The protein resides in the cell membrane. This is an uncharacterized protein from Bacillus subtilis (strain 168).